Reading from the N-terminus, the 85-residue chain is Cell division topological specificity factor (85 aa).

It belongs to the MinE family.

In terms of biological role, prevents the cell division inhibition by proteins MinC and MinD at internal division sites while permitting inhibition at polar sites. This ensures cell division at the proper site by restricting the formation of a division septum at the midpoint of the long axis of the cell. The protein is Cell division topological specificity factor of Shewanella baltica (strain OS223).